We begin with the raw amino-acid sequence, 122 residues long: Ribosome-binding factor A (122 aa).

The protein belongs to the RbfA family. In terms of assembly, monomer. Binds 30S ribosomal subunits, but not 50S ribosomal subunits or 70S ribosomes.

It localises to the cytoplasm. Its function is as follows. One of several proteins that assist in the late maturation steps of the functional core of the 30S ribosomal subunit. Associates with free 30S ribosomal subunits (but not with 30S subunits that are part of 70S ribosomes or polysomes). Required for efficient processing of 16S rRNA. May interact with the 5'-terminal helix region of 16S rRNA. In Moorella thermoacetica (strain ATCC 39073 / JCM 9320), this protein is Ribosome-binding factor A.